Reading from the N-terminus, the 532-residue chain is Fe-S cluster assembly factor HCF101, chloroplastic (532 aa).

A chloroplast-targeting transit peptide spans 1-61 (MPLLHPQSLR…RVSQNLSVAK (61 aa)). Position 62 is an N-acetylalanine (alanine 62). 184–191 (CKGGVGKS) contributes to the ATP binding site.

The protein belongs to the Mrp/NBP35 ATP-binding proteins family. [4Fe-4S] cluster is required as a cofactor. Expressed in aerial tissues exposed to light. Very low expression in roots.

The protein resides in the plastid. The protein localises to the chloroplast stroma. Its function is as follows. Required for photosystem I (PSI) biosynthesis and assembly. May serve as a chloroplast scaffold protein that specifically assembles iron-sulfur (4Fe-4S) clusters and transfers them to the chloroplast PSI and ferredoxin-thioredoxin (FTR) complexes. Can assemble a 4Fe-4S cluster and transfer it to apoproteins in yeast cells. Probably not required for assembly or stability of plastidic 2Fe-2S clusters. This is Fe-S cluster assembly factor HCF101, chloroplastic (HCF101) from Arabidopsis thaliana (Mouse-ear cress).